Here is a 147-residue protein sequence, read N- to C-terminus: D-aminoacyl-tRNA deacylase (147 aa).

A Gly-cisPro motif, important for rejection of L-amino acids motif is present at residues 137 to 138; that stretch reads GP.

It belongs to the DTD family. Homodimer.

The protein localises to the cytoplasm. It catalyses the reaction glycyl-tRNA(Ala) + H2O = tRNA(Ala) + glycine + H(+). The catalysed reaction is a D-aminoacyl-tRNA + H2O = a tRNA + a D-alpha-amino acid + H(+). Functionally, an aminoacyl-tRNA editing enzyme that deacylates mischarged D-aminoacyl-tRNAs. Also deacylates mischarged glycyl-tRNA(Ala), protecting cells against glycine mischarging by AlaRS. Acts via tRNA-based rather than protein-based catalysis; rejects L-amino acids rather than detecting D-amino acids in the active site. By recycling D-aminoacyl-tRNA to D-amino acids and free tRNA molecules, this enzyme counteracts the toxicity associated with the formation of D-aminoacyl-tRNA entities in vivo and helps enforce protein L-homochirality. The protein is D-aminoacyl-tRNA deacylase of Bacillus velezensis (strain DSM 23117 / BGSC 10A6 / LMG 26770 / FZB42) (Bacillus amyloliquefaciens subsp. plantarum).